The primary structure comprises 575 residues: Amino-acid acetyltransferase, mitochondrial (575 aa).

The N-terminal 35 residues, 1 to 35 (MSKLRNLNRQFISNLKTHETVTNAKRNLILSILKS), are a transit peptide targeting the mitochondrion. Residues 398-557 (FTLNNLVQDG…QGIPGGVNIH (160 aa)) form the N-acetyltransferase domain.

Belongs to the acetyltransferase family.

The protein resides in the mitochondrion. It carries out the reaction L-glutamate + acetyl-CoA = N-acetyl-L-glutamate + CoA + H(+). It functions in the pathway amino-acid biosynthesis; L-arginine biosynthesis; N(2)-acetyl-L-ornithine from L-glutamate: step 1/4. Its function is as follows. N-acetylglutamate synthase involved in arginine biosynthesis. The protein is Amino-acid acetyltransferase, mitochondrial (ARG2) of Debaryomyces hansenii (strain ATCC 36239 / CBS 767 / BCRC 21394 / JCM 1990 / NBRC 0083 / IGC 2968) (Yeast).